The primary structure comprises 1857 residues: Ankyrin repeat domain-containing protein 31 (1857 aa).

Disordered stretches follow at residues M1–E30 and S195–S215. Over residues S195 to S207 the composition is skewed to polar residues. 3 ANK repeats span residues F475–Q504, D508–V537, and Y541–F570. Polar residues predominate over residues K676–N691. 5 disordered regions span residues K676–R711, V813–A844, R995–H1038, K1046–F1065, and A1075–R1137. Basic residues predominate over residues V692 to K704. Residues T814–N839 show a composition bias toward polar residues. A compositionally biased stretch (basic and acidic residues) spans S1008 to Y1019. Residues G1023–P1032 show a composition bias toward polar residues. The segment covering Q1082–F1136 has biased composition (basic and acidic residues). ANK repeat units follow at residues K1162 to L1191, A1195 to C1224, and D1228 to Q1257. Disordered regions lie at residues N1457–Q1479, G1540–S1570, D1609–L1640, and A1663–R1697. Residues A1555 to S1570 show a composition bias toward polar residues. Positions A1663–Q1683 are enriched in low complexity. Residues K1687–C1782 form the RAMA domain.

Interacts with REC114; the interaction is direct. Interacts with IHO1. As to expression, present in meiotic cells (at protein level).

The protein localises to the nucleus. Its subcellular location is the chromosome. In terms of biological role, required for DNA double-strand breaks (DSBs) formation during meiotic recombination. Regulates the spatial and temporal patterns of pre-DSB recombinosome assembly and recombination activity by acting as a scaffold that anchors REC114 and other factors to specific genomic locations, thereby regulating DSB formation. Plays a key role in recombination in the pseudoautosomal regions of sex chromosomes. This Mus musculus (Mouse) protein is Ankyrin repeat domain-containing protein 31.